The following is a 341-amino-acid chain: MSNDLEALRQETEQLKNQIREARKAAGDTTLAQACSGVEAVGRIQMRTRRTLRGHLAKIYAMHWASDSRNLVSASQDGKLIVWDGYTTNKVHAIPLRSSWVMTCAYAPSGNFVACGGLDNICSIYSLKTREGNVRVSRELPGHTGYLSCCRFIDDNSIVTSSGDMSCALWDIETGQQTTSFTGHTGDVMSLSTSPDFRTFVSGACDASAKLWDVRDGMCKQTFSGHESDINAITYFPNGHAFATGSDDATCRLFDIRADQEIGMYSHDNIICGITSVAFSKSGRLLLGRYDDFNCNVWDVLKQETHGVLAGHDNRVSCLGVTEDGSAVATGSWDSFLKIWN.

WD repeat units follow at residues 54–84 (GHLAKIYAMHWASDSRNLVSASQDGKLIVWD), 96–126 (LRSSWVMTCAYAPSGNFVACGGLDNICSIYS), 142–171 (GHTGYLSCCRFIDDNSIVTSSGDMSCALWD), 183–213 (GHTGDVMSLSTSPDFRTFVSGACDASAKLWD), 225–255 (GHESDINAITYFPNGHAFATGSDDATCRLFD), 269–299 (NIICGITSVAFSKSGRLLLGRYDDFNCNVWD), and 311–341 (GHDNRVSCLGVTEDGSAVATGSWDSFLKIWN).

It belongs to the WD repeat G protein beta family. As to quaternary structure, g proteins are composed of 3 units, alpha, beta and gamma.

Guanine nucleotide-binding proteins (G proteins) are involved as a modulator or transducer in various transmembrane signaling systems. The beta and gamma chains are required for the GTPase activity, for replacement of GDP by GTP, and for G protein-effector interaction. The sequence is that of Guanine nucleotide-binding protein subunit beta from Lymnaea stagnalis (Great pond snail).